Consider the following 52-residue polypeptide: Alpha-crystallin B chain (52 aa).

Belongs to the small heat shock protein (HSP20) family. Homodimer. Aggregates with homologous proteins, including alpha-A-crystallin and the small heat shock protein HSPB1, to form large heteromeric complexes.

Its function is as follows. May contribute to the transparency and refractive index of the lens. This chain is Alpha-crystallin B chain (CRYAB), found in Eudromia elegans (Elegant crested-tinamou).